Here is a 334-residue protein sequence, read N- to C-terminus: Pre-mRNA leakage protein 39 (334 aa).

In terms of assembly, interacts with MLP1 and MLP2.

It is found in the nucleus membrane. Its function is as follows. Involved in the nuclear retention of improperly spliced pre-mRNAs. The chain is Pre-mRNA leakage protein 39 (PML39) from Saccharomyces cerevisiae (strain ATCC 204508 / S288c) (Baker's yeast).